The sequence spans 348 residues: Protein RecA (348 aa).

An ATP-binding site is contributed by 67-74 (GPESSGKT).

Belongs to the RecA family.

It localises to the cytoplasm. Its function is as follows. Can catalyze the hydrolysis of ATP in the presence of single-stranded DNA, the ATP-dependent uptake of single-stranded DNA by duplex DNA, and the ATP-dependent hybridization of homologous single-stranded DNAs. It interacts with LexA causing its activation and leading to its autocatalytic cleavage. This chain is Protein RecA, found in Salinispora arenicola (strain CNS-205).